The sequence spans 589 residues: Chromodomain Y-like protein (589 aa).

The span at 1–10 shows a compositional bias: polar residues; it reads MGLGSSQPST. The segment at 1-57 is disordered; it reads MGLGSSQPSTKEAEPCTLQEKEEHPVDDTRQQNNAVPATVSDPDQVSPAVQDAETQV. Positions 11 to 30 are enriched in basic and acidic residues; that stretch reads KEAEPCTLQEKEEHPVDDTR. The Chromo domain occupies 55–115; it reads TQVESIVDKR…RHNERQKEGT (61 aa). The interval 55 to 300 is interaction with EZH2; the sequence is TQVESIVDKR…TIQTSVTGVT (246 aa). Phosphoserine is present on Ser82. The segment at 110–155 is disordered; sequence RQKEGTLARANRASPSNARKQISRSTHSALSKTNPKALVVGKDHES. The span at 117–128 shows a compositional bias: low complexity; that stretch reads ARANRASPSNAR. Residue Lys129 is modified to N6,N6,N6-trimethyllysine; by EHMT2; alternate. Lys129 carries the post-translational modification N6,N6-dimethyllysine; by EHMT2; alternate. Lys129 is subject to N6-methyllysine; by EHMT2; alternate. Residues 132–143 are compositionally biased toward polar residues; the sequence is SRSTHSALSKTN. 3 positions are modified to phosphoserine: Ser164, Ser195, and Ser210. The segment at 202–224 is disordered; sequence SIDGFHGESPEKLDQGAEDTVTP. Positions 206–216 are enriched in basic and acidic residues; the sequence is FHGESPEKLDQ. The segment at 353 to 585 is acetyl-CoA-binding domain; the sequence is SENNSLNPEV…DSMLKYLQRK (233 aa).

In terms of assembly, forms multimers and multimerization is required for stable binding to chromatin. Interacts with HDAC1 and HDAC2 via its C-terminal acetyl-CoA-binding domain. Interacts with EZH2, EED, SUZ12, REST, EHMT1 and EHMT2. Part of a complex containing at least CDYL, REST, WIZ, SETB1, EHMT1 and EHMT2. Part of a complex containing at least CDYL, MIER1, MIER2, HDAC1 and HDAC2. Interacts with CHAF1A and CHAF1B; bridging the CAF-1 complex to the MCM2-7 (MCM) complex. Interacts with MCM3 and MCM5; bridging the CAF-1 complex to the MCM2-7 (MCM) complex. Recruited to Xist RNA-coated X chromosome. Interacts with EHMT2 and PRDM9; interaction only takes place when PRDM9 is bound to hotspot DNA. As to expression, expressed in the brain, with expression in the hippocampal dentate gyrus, CA1, striatum and cortex (at protein level). Expressed in the prelimbic cortex.

It is found in the nucleus. It localises to the chromosome. It carries out the reaction 3-hydroxybutanoyl-CoA = (2E)-butenoyl-CoA + H2O. Functionally, chromatin reader protein that recognizes and binds histone H3 trimethylated at 'Lys-9', dimethylated at 'Lys-27' and trimethylated at 'Lys-27' (H3K9me3, H3K27me2 and H3K27me3, respectively). Part of multimeric repressive chromatin complexes, where it is required for transmission and restoration of repressive histone marks, thereby preserving the epigenetic landscape. Required for chromatin targeting and maximal enzymatic activity of Polycomb repressive complex 2 (PRC2); acts as a positive regulator of PRC2 activity by bridging the pre-existing histone H3K27me3 and newly recruited PRC2 on neighboring nucleosomes. Acts as a corepressor for REST by facilitating histone-lysine N-methyltransferase EHMT2 recruitment and H3K9 dimethylation at REST target genes for repression. Involved in X chromosome inactivation in females: recruited to Xist RNA-coated X chromosome and facilitates propagation of H3K9me2 by anchoring EHMT2. Promotes EZH2 accumulation and H3K27me3 methylation at DNA double strand breaks (DSBs), thereby facilitating transcriptional repression at sites of DNA damage and homology-directed repair of DSBs. Required for neuronal migration during brain development by repressing expression of RHOA. By repressing the expression of SCN8A, contributes to the inhibition of intrinsic neuronal excitability and epileptogenesis. In addition to acting as a chromatin reader, acts as a hydro-lyase. Shows crotonyl-coA hydratase activity by mediating the conversion of crotonyl-CoA ((2E)-butenoyl-CoA) to beta-hydroxybutyryl-CoA (3-hydroxybutanoyl-CoA), thereby acting as a negative regulator of histone crotonylation. Histone crotonylation is required during spermatogenesis; down-regulation of histone crotonylation by CDYL regulates the reactivation of sex chromosome-linked genes in round spermatids and histone replacement in elongating spermatids. By regulating histone crotonylation and trimethylation of H3K27, may be involved in stress-induced depression-like behaviors, possibly by regulating VGF expression. Displays acetyltransferase activity toward tubulin in vitro; such activity is however unsure in vivo and additional evidences would be required to confirm this result. Its function is as follows. Not able to recognize and bind histone H3K9me3, histone H3K27me2 and histone H3K27me3, due to the presence of a N-terminal extension that inactivates the chromo domain. The chain is Chromodomain Y-like protein from Rattus norvegicus (Rat).